A 315-amino-acid polypeptide reads, in one-letter code: Ankyrin repeat domain-containing protein 54 (315 aa).

Residues 1-49 (MDGSSPLLAAAGSDGDRSSSEGEYTLAGGPSAGDTEKREGESPMEAAGA) are disordered. ANK repeat units lie at residues 124-153 (HAVKRLREAANSNDIDTVRRLLEDDTDPCA), 157-186 (KGRTALHFSSCNGNETIVQLLLSYGADPNQ), 190-219 (LGNTPLHLAACTNHVPVITTLLRGGARVDA), and 223-255 (AGRTPLHLARSKLNILQEGDSRSLETLRGEVTQ).

The protein localises to the nucleus. The protein resides in the cytoplasm. It is found in the midbody. Plays an important role in regulating intracellular signaling events associated with erythroid terminal differentiation. The protein is Ankyrin repeat domain-containing protein 54 (ankrd54) of Danio rerio (Zebrafish).